An 81-amino-acid polypeptide reads, in one-letter code: Short neurotoxin 2 (81 aa).

The signal sequence occupies residues 1–21; sequence MKTLLLTLVVVTIVCLDLGYT. 4 disulfide bridges follow: C24/C43, C38/C60, C62/C73, and C74/C79.

This sequence belongs to the three-finger toxin family. Short-chain subfamily. Type I alpha-neurotoxin sub-subfamily. Expressed by the venom gland.

It localises to the secreted. In terms of biological role, binds to muscle nicotinic acetylcholine receptor (nAChR) and inhibit acetylcholine from binding to the receptor, thereby impairing neuromuscular transmission. This chain is Short neurotoxin 2, found in Hydrophis hardwickii (Hardwick's spine-bellied seasnake).